Consider the following 311-residue polypeptide: Malate dehydrogenase (311 aa).

Residues 7-13 (GAAGGIG) and aspartate 34 contribute to the NAD(+) site. Positions 81 and 87 each coordinate substrate. NAD(+) is bound by residues asparagine 94 and 117–119 (ITN). The substrate site is built by asparagine 119 and arginine 153. The active-site Proton acceptor is the histidine 177. Methionine 227 is a binding site for NAD(+).

The protein belongs to the LDH/MDH superfamily. MDH type 1 family. In terms of assembly, homodimer.

It carries out the reaction (S)-malate + NAD(+) = oxaloacetate + NADH + H(+). Its function is as follows. Catalyzes the reversible oxidation of malate to oxaloacetate. This chain is Malate dehydrogenase, found in Histophilus somni (strain 129Pt) (Haemophilus somnus).